Here is a 686-residue protein sequence, read N- to C-terminus: Endonuclease GajA (686 aa).

The interval 1–423 (MYLKSLKIYN…NYVTTKNNYT (423 aa)) is ATPase domain. 52-56 (NCGKT) is an ATP binding site. The segment at 463-599 (FFSDAIIFVE…TSFEEAFILT (137 aa)) is toprim domain. A divalent metal cation-binding residues include glutamate 472, glutamate 476, aspartate 559, and glutamate 604.

Homotetramer. Forms the core of the anti-phage defense complex. Interacts with GajB; 2 GajB dimers dock at opposite sides of the GajA complex to form a 4:4 GajA-GajB assembly (GajAB). GajAB interacts with Bacillus phage Phi3T Gad1 protein; this interaction forms a 4:4:8 GajAB-Gad1 complex and leads to GajAB inhibition. Mg(2+) serves as cofactor.

In terms of biological role, component of antiviral defense system Gabija type II, composed of GajA and GajB. Probably a nicking endonuclease that is strongly inhibited by physiological levels of nucleotides (NTP and dNTP). Expression of Gabija type II in B.subtilis (strain BEST7003) confers resistance to phages phi105, and SpBeta. During viral replication, when nucleotides are rapidly consumed, it is de-suppressed and degrades target DNA. The chain is Endonuclease GajA from Bacillus cereus (strain HuB5-5).